Reading from the N-terminus, the 176-residue chain is Ribosome maturation factor RimM (176 aa).

The 80-residue stretch at 97–176 (EDEFYWRDLI…QILVDWDPDF (80 aa)) folds into the PRC barrel domain.

This sequence belongs to the RimM family. Binds ribosomal protein uS19.

Its subcellular location is the cytoplasm. In terms of biological role, an accessory protein needed during the final step in the assembly of 30S ribosomal subunit, possibly for assembly of the head region. Essential for efficient processing of 16S rRNA. May be needed both before and after RbfA during the maturation of 16S rRNA. It has affinity for free ribosomal 30S subunits but not for 70S ribosomes. This Shewanella halifaxensis (strain HAW-EB4) protein is Ribosome maturation factor RimM.